Consider the following 473-residue polypeptide: Ras-GEF domain-containing family member 1B (473 aa).

The N-terminal Ras-GEF domain maps to 34 to 164; sequence HDNNLLSGSL…QMMQCLIRKL (131 aa). Positions 204–452 constitute a Ras-GEF domain; that stretch reads NDPYTLAQQL…LYLASYESEG (249 aa).

Interacts with Ras family proteins. Interacts with CCDC124 during cytokinesis.

The protein resides in the early endosome. The protein localises to the late endosome. Its subcellular location is the midbody. In terms of biological role, guanine nucleotide exchange factor (GEF) with specificity for RAP2A, it doesn't seems to activate other Ras family proteins (in vitro). The protein is Ras-GEF domain-containing family member 1B (RASGEF1B) of Homo sapiens (Human).